A 132-amino-acid polypeptide reads, in one-letter code: ATP synthase epsilon chain (132 aa).

It belongs to the ATPase epsilon chain family. As to quaternary structure, F-type ATPases have 2 components, CF(1) - the catalytic core - and CF(0) - the membrane proton channel. CF(1) has five subunits: alpha(3), beta(3), gamma(1), delta(1), epsilon(1). CF(0) has three main subunits: a, b and c.

The protein localises to the cell inner membrane. Its function is as follows. Produces ATP from ADP in the presence of a proton gradient across the membrane. This Cereibacter sphaeroides (strain ATCC 17025 / ATH 2.4.3) (Rhodobacter sphaeroides) protein is ATP synthase epsilon chain.